Reading from the N-terminus, the 125-residue chain is UPF0102 protein PSPA7_4996 (125 aa).

Belongs to the UPF0102 family.

This chain is UPF0102 protein PSPA7_4996, found in Pseudomonas paraeruginosa (strain DSM 24068 / PA7) (Pseudomonas aeruginosa (strain PA7)).